The primary structure comprises 139 residues: Gene 39 protein (139 aa).

The polypeptide is Gene 39 protein (39) (Mycobacterium (Mycobacteriophage L5)).